The primary structure comprises 391 residues: Metal tolerance protein 7 (391 aa).

The tract at residues 1–21 is disordered; sequence MGSRGRRGGGERETETEEDET. The Cytoplasmic segment spans residues 1–103; it reads MGSRGRRGGG…LRQMAKGERL (103 aa). A helical membrane pass occupies residues 104–124; the sequence is AINLSNIINLILFIGKVLASV. Over 125–134 the chain is Vacuolar; the sequence is ESLSMAVIAS. A helical membrane pass occupies residues 135-155; sequence TLDSLLDLLSGFILWFTAHAM. Residues 156-171 are Cytoplasmic-facing; that stretch reads KKPNKYSYPIGKRRMQ. A helical transmembrane segment spans residues 172-192; that stretch reads PVGIIVFASVMGTLGFQVLIE. Residues 193-210 are Vacuolar-facing; that stretch reads SGRQLITNEHQVFDHRKE. A helical membrane pass occupies residues 211–231; that stretch reads LWMIGSMSSVAVVKFFLMLYC. Residues 232–246 lie on the Cytoplasmic side of the membrane; sequence RSFKNEIVRAYAQDH. A helical membrane pass occupies residues 247–264; the sequence is FFDVITNSVGLVSALLAV. Residues 265-266 lie on the Vacuolar side of the membrane; the sequence is RY. The chain crosses the membrane as a helical span at residues 267–287; that stretch reads KWWMDPVGAILIAVYTITTWA. At 288 to 391 the chain is on the cytoplasmic side; the sequence is RTVVENVGTL…THRPEHKAEV (104 aa).

Belongs to the cation diffusion facilitator (CDF) transporter (TC 2.A.4) family. SLC30A subfamily.

It localises to the vacuole membrane. In terms of biological role, involved in sequestration of excess metal in the cytoplasm into vacuoles to maintain metal homeostasis. This chain is Metal tolerance protein 7 (MTP7), found in Oryza sativa subsp. japonica (Rice).